We begin with the raw amino-acid sequence, 428 residues long: Serine--tRNA ligase (428 aa).

Residue 231–233 participates in L-serine binding; it reads TAE. An ATP-binding site is contributed by 262-264; sequence RAE. Residue Glu-285 coordinates L-serine. Residue 349 to 352 participates in ATP binding; that stretch reads EISS. Ser-385 serves as a coordination point for L-serine.

Belongs to the class-II aminoacyl-tRNA synthetase family. Type-1 seryl-tRNA synthetase subfamily. As to quaternary structure, homodimer. The tRNA molecule binds across the dimer.

The protein localises to the cytoplasm. The catalysed reaction is tRNA(Ser) + L-serine + ATP = L-seryl-tRNA(Ser) + AMP + diphosphate + H(+). It carries out the reaction tRNA(Sec) + L-serine + ATP = L-seryl-tRNA(Sec) + AMP + diphosphate + H(+). It functions in the pathway aminoacyl-tRNA biosynthesis; selenocysteinyl-tRNA(Sec) biosynthesis; L-seryl-tRNA(Sec) from L-serine and tRNA(Sec): step 1/1. In terms of biological role, catalyzes the attachment of serine to tRNA(Ser). Is also able to aminoacylate tRNA(Sec) with serine, to form the misacylated tRNA L-seryl-tRNA(Sec), which will be further converted into selenocysteinyl-tRNA(Sec). The polypeptide is Serine--tRNA ligase (Methylorubrum extorquens (strain PA1) (Methylobacterium extorquens)).